Here is a 260-residue protein sequence, read N- to C-terminus: tRNA pseudouridine synthase A (260 aa).

Asp-52 acts as the Nucleophile in catalysis. Substrate is bound at residue Tyr-110.

Belongs to the tRNA pseudouridine synthase TruA family. As to quaternary structure, homodimer.

The enzyme catalyses uridine(38/39/40) in tRNA = pseudouridine(38/39/40) in tRNA. In terms of biological role, formation of pseudouridine at positions 38, 39 and 40 in the anticodon stem and loop of transfer RNAs. The protein is tRNA pseudouridine synthase A of Thiobacillus denitrificans (strain ATCC 25259 / T1).